The primary structure comprises 305 residues: ATP synthase F(0) complex subunit B2, mitochondrial (305 aa).

Residues 1-22 constitute a mitochondrion transit peptide; sequence MSLSRCLPLGQNARVIIIPARL.

This sequence belongs to the eukaryotic ATPase B chain family. Subunit of the F-type ATPase which has 2 components, CF(1) - the catalytic core - and CF(0) - the membrane proton channel.

Its subcellular location is the mitochondrion. It localises to the mitochondrion inner membrane. Functionally, mitochondrial membrane ATP synthase (F(1)F(0) ATP synthase or Complex V) produces ATP from ADP in the presence of a proton gradient across the membrane which is generated by electron transport complexes of the respiratory chain. F-type ATPases consist of two structural domains, F(1) - containing the extramembraneous catalytic core, and F(0) - containing the membrane proton channel, linked together by a central stalk and a peripheral stalk. During catalysis, ATP synthesis in the catalytic domain of F(1) is coupled via a rotary mechanism of the central stalk subunits to proton translocation. Part of the complex F(0) domain and the peripheric stalk, which acts as a stator to hold the subunits of the catalytic subcomplexes relative to the rotary elements. Plays a role in somatic development. Does not play a role in germline development. The chain is ATP synthase F(0) complex subunit B2, mitochondrial from Caenorhabditis elegans.